The sequence spans 166 residues: Methylmalonyl-CoA epimerase, mitochondrial (166 aa).

Residues 1–23 constitute a mitochondrion transit peptide; sequence MFKQLIKTTLTNSRSFSTNTGSG. The VOC domain occupies 37–166; that stretch reads KLNHVAIATP…NGVLVELEEK (130 aa). Co(2+) contacts are provided by H40, H112, and E162.

The protein belongs to the methylmalonyl-CoA epimerase family.

It is found in the mitochondrion. It carries out the reaction (R)-methylmalonyl-CoA = (S)-methylmalonyl-CoA. Methylmalonyl-CoA epimerase involved in propionyl-CoA metabolism. The sequence is that of Methylmalonyl-CoA epimerase, mitochondrial (mcee) from Dictyostelium discoideum (Social amoeba).